Reading from the N-terminus, the 658-residue chain is Protein teflon (658 aa).

A C2H2-type 1 zinc finger spans residues 33–56 (LYCHFCRDLFTQLPEFLRHLQGAH). Disordered regions lie at residues 78–127 (EQDD…SEQK) and 151–175 (HINNESKPENGGFNGPCKKASSESN). Over residues 100–111 (IPAKSEDSRAID) the composition is skewed to basic and acidic residues. Residues 118 to 127 (DNSPVKSEQK) show a composition bias toward polar residues. The C2H2-type 2; degenerate zinc-finger motif lies at 608-630 (YFCKCCDDIFTLNEDYTRHLVSQ). A C2H2-type 3 zinc finger spans residues 634–657 (YQCTKCIKAFKYRGHFEKHLQNVH).

It belongs to the Teflon family.

The protein localises to the nucleus. Its subcellular location is the chromosome. In terms of biological role, specifically required in males for proper segregation of autosomal bivalents at meiosis I. Expression is required in the male germ line prior to spermatocyte stage S4. May have a role as a bridging molecule maintaining adhesion to hold autosome bivalents together via heterochromatic connections. The sequence is that of Protein teflon from Drosophila erecta (Fruit fly).